We begin with the raw amino-acid sequence, 179 residues long: Large ribosomal subunit protein uL5 (179 aa).

This sequence belongs to the universal ribosomal protein uL5 family. As to quaternary structure, part of the 50S ribosomal subunit; part of the 5S rRNA/L5/L18/L25 subcomplex. Contacts the 5S rRNA and the P site tRNA. Forms a bridge to the 30S subunit in the 70S ribosome.

Functionally, this is one of the proteins that bind and probably mediate the attachment of the 5S RNA into the large ribosomal subunit, where it forms part of the central protuberance. In the 70S ribosome it contacts protein S13 of the 30S subunit (bridge B1b), connecting the 2 subunits; this bridge is implicated in subunit movement. Contacts the P site tRNA; the 5S rRNA and some of its associated proteins might help stabilize positioning of ribosome-bound tRNAs. This Macrococcus caseolyticus (strain JCSC5402) (Macrococcoides caseolyticum) protein is Large ribosomal subunit protein uL5.